A 151-amino-acid chain; its full sequence is Protein SprT-like (151 aa).

The region spanning 6–147 (LQRMVENLSE…GHCNGKLRMK (142 aa)) is the SprT-like domain. His-67 serves as a coordination point for Zn(2+). Glu-68 is an active-site residue. Zn(2+) is bound at residue His-71.

It belongs to the SprT family. It depends on Zn(2+) as a cofactor.

The protein localises to the cytoplasm. This chain is Protein SprT-like, found in Staphylococcus aureus (strain MRSA252).